A 430-amino-acid chain; its full sequence is Delta-aminolevulinic acid dehydratase 1, chloroplastic (430 aa).

A chloroplast-targeting transit peptide spans 1-52 (MATTPIFNASCSFPSTRGIDCKSYIGLRSNVSKVSVASSRIATSQRRNLVVR). The span at 82 to 91 (EAPPVPPKPA) shows a compositional bias: pro residues. The disordered stretch occupies residues 82–101 (EAPPVPPKPAAPVGTPIIKP). Lysine 298 acts as the Schiff-base intermediate with substrate in catalysis. 5-aminolevulinate is bound by residues arginine 308 and lysine 320. Glutamate 336 provides a ligand contact to Mg(2+). Lysine 351 (schiff-base intermediate with substrate) is an active-site residue. 5-aminolevulinate contacts are provided by serine 377 and tyrosine 416.

It belongs to the ALAD family. Homooctamer. The cofactor is Mg(2+). Highly expressed in cotyledons during dark-to-light transition.

It localises to the plastid. It is found in the chloroplast. It catalyses the reaction 2 5-aminolevulinate = porphobilinogen + 2 H2O + H(+). It participates in porphyrin-containing compound metabolism; protoporphyrin-IX biosynthesis; coproporphyrinogen-III from 5-aminolevulinate: step 1/4. It functions in the pathway porphyrin-containing compound metabolism; chlorophyll biosynthesis. Catalyzes an early step in the biosynthesis of tetrapyrroles. Binds two molecules of 5-aminolevulinate per subunit, each at a distinct site, and catalyzes their condensation to form porphobilinogen. The protein is Delta-aminolevulinic acid dehydratase 1, chloroplastic (HEMB1) of Arabidopsis thaliana (Mouse-ear cress).